A 324-amino-acid chain; its full sequence is Antihemorrhagic factor cMSF (324 aa).

The signal sequence occupies residues 1–19 (MHFLVALVLLGQIIGSTLS). 2 consecutive Cystatin fetuin-A-type domains span residues 22 to 130 (VRGD…VKCH) and 141 to 254 (RNCL…SDCV). The Cell attachment site signature appears at 23 to 25 (RGD). Disulfide bonds link cysteine 28-cysteine 315, cysteine 85-cysteine 96, cysteine 110-cysteine 129, cysteine 143-cysteine 146, cysteine 205-cysteine 217, cysteine 230-cysteine 253, and cysteine 287-cysteine 291. Asparagine 204 carries an N-linked (GlcNAc...) asparagine glycan. An N-linked (GlcNAc...) asparagine glycan is attached at asparagine 282.

Homodimer. As to expression, expressed by the liver.

Its subcellular location is the secreted. In terms of biological role, suppress hemorrhage induced by metalloproteinases from the same venom (brevilysin-H3, -H4, -H6) and from habu venom (metalloproteinases HR1A and HR1B). The non-hemorrhagic brevilysin-L4 is not inhibited by cMSF. Does not inhibit serine and cysteine proteases such as trypsin, chymotrypsin, thermolysin, and papain. The inhibition may occur by formation of a non-covalent complex between this protein and the proteinases at their metalloproteinase domains. This Gloydius brevicauda (Korean slamosa snake) protein is Antihemorrhagic factor cMSF.